Reading from the N-terminus, the 422-residue chain is Bifunctional enzyme IspD/IspF (422 aa).

The segment at 1–267 (MAVGLLLLAA…PISALSMPLP (267 aa)) is 2-C-methyl-D-erythritol 4-phosphate cytidylyltransferase. The segment at 268 to 422 (LIGVGIDFHK…AIAVAQIYHR (155 aa)) is 2-C-methyl-D-erythritol 2,4-cyclodiphosphate synthase. A divalent metal cation-binding residues include Asp274 and His276. 4-CDP-2-C-methyl-D-erythritol 2-phosphate contacts are provided by residues 274–276 (DFH) and 301–302 (HS). Residue His309 participates in a divalent metal cation binding. 4-CDP-2-C-methyl-D-erythritol 2-phosphate contacts are provided by residues 323–325 (DIG), Phe404, and Arg407.

The protein in the N-terminal section; belongs to the IspD/TarI cytidylyltransferase family. IspD subfamily. This sequence in the C-terminal section; belongs to the IspF family. It depends on a divalent metal cation as a cofactor.

The enzyme catalyses 2-C-methyl-D-erythritol 4-phosphate + CTP + H(+) = 4-CDP-2-C-methyl-D-erythritol + diphosphate. The catalysed reaction is 4-CDP-2-C-methyl-D-erythritol 2-phosphate = 2-C-methyl-D-erythritol 2,4-cyclic diphosphate + CMP. The protein operates within isoprenoid biosynthesis; isopentenyl diphosphate biosynthesis via DXP pathway; isopentenyl diphosphate from 1-deoxy-D-xylulose 5-phosphate: step 2/6. It functions in the pathway isoprenoid biosynthesis; isopentenyl diphosphate biosynthesis via DXP pathway; isopentenyl diphosphate from 1-deoxy-D-xylulose 5-phosphate: step 4/6. In terms of biological role, bifunctional enzyme that catalyzes the formation of 4-diphosphocytidyl-2-C-methyl-D-erythritol from CTP and 2-C-methyl-D-erythritol 4-phosphate (MEP) (IspD), and catalyzes the conversion of 4-diphosphocytidyl-2-C-methyl-D-erythritol 2-phosphate (CDP-ME2P) to 2-C-methyl-D-erythritol 2,4-cyclodiphosphate (ME-CPP) with a corresponding release of cytidine 5-monophosphate (CMP) (IspF). This Tropheryma whipplei (strain TW08/27) (Whipple's bacillus) protein is Bifunctional enzyme IspD/IspF.